We begin with the raw amino-acid sequence, 194 residues long: Small ribosomal subunit protein uS11m (194 aa).

The protein belongs to the universal ribosomal protein uS11 family. In terms of assembly, component of the mitochondrial small ribosomal subunit (mt-SSU). Mature mammalian 55S mitochondrial ribosomes consist of a small (28S) and a large (39S) subunit. The 28S small subunit contains a 12S ribosomal RNA (12S mt-rRNA) and 30 different proteins. The 39S large subunit contains a 16S rRNA (16S mt-rRNA), a copy of mitochondrial valine transfer RNA (mt-tRNA(Val)), which plays an integral structural role, and 52 different proteins.

It is found in the mitochondrion. The chain is Small ribosomal subunit protein uS11m (MRPS11) from Homo sapiens (Human).